The following is a 268-amino-acid chain: Serine/arginine-rich splicing factor SR30 (268 aa).

RRM domains lie at 7-82 (RTIY…IAHG) and 109-187 (YRVL…EYES). The segment covering 186 to 199 (ESRSVSRSPDDSKS) has biased composition (basic and acidic residues). The disordered stretch occupies residues 186-268 (ESRSVSRSPD…NSPVSPVISG (83 aa)). Residues Ser-193, Ser-210, Ser-212, Ser-214, Ser-219, Ser-221, Ser-227, Ser-236, Ser-246, Ser-256, and Ser-260 each carry the phosphoserine modification. Residues 207 to 247 (RGPSCSYSSKSRSVSPARSISPRSRPLSRSRSLYSSVSRSQ) are compositionally biased toward low complexity. Residues 257-268 (RSNSPVSPVISG) show a composition bias toward low complexity.

The protein belongs to the splicing factor SR family. SR subfamily. In terms of assembly, component of the spliceosome. Interacts with SNRNP35, CYP59 and CYP63. Post-translationally, phosphorylated. As to expression, ubiquitous.

The protein resides in the nucleus speckle. Its subcellular location is the nucleus. It is found in the nucleoplasm. The protein localises to the cytoplasm. Regulatory splicing factor that modulates alternative splicing and gene expression in specific cell types. Autoregulates its own expression. Probably involved in intron recognition and spliceosome assembly. The polypeptide is Serine/arginine-rich splicing factor SR30 (SR30) (Arabidopsis thaliana (Mouse-ear cress)).